The chain runs to 56 residues: Conotoxin Bu12 (56 aa).

The N-terminal stretch at 1–2 (TA) is a signal peptide. The propeptide occupies 3-25 (EDSRGTQLHRALRKATKLPVSTR). Intrachain disulfides connect Cys-26–Cys-40, Cys-33–Cys-44, and Cys-39–Cys-49.

Belongs to the conotoxin O1 superfamily. As to expression, expressed by the venom duct.

It localises to the secreted. The chain is Conotoxin Bu12 from Conus bullatus (Bubble cone).